We begin with the raw amino-acid sequence, 598 residues long: UvrABC system protein C (598 aa).

One can recognise a GIY-YIG domain in the interval 14 to 91 (DSPGCYLHKD…IQKNMPKYNI (78 aa)). The region spanning 196–231 (DKIIEDLRSKMLAASEEMAFERAAEYRDLISGIATM) is the UVR domain.

The protein belongs to the UvrC family. As to quaternary structure, interacts with UvrB in an incision complex.

It localises to the cytoplasm. In terms of biological role, the UvrABC repair system catalyzes the recognition and processing of DNA lesions. UvrC both incises the 5' and 3' sides of the lesion. The N-terminal half is responsible for the 3' incision and the C-terminal half is responsible for the 5' incision. This is UvrABC system protein C from Streptococcus pyogenes serotype M5 (strain Manfredo).